The chain runs to 464 residues: GDNF family receptor alpha-2 (464 aa).

The first 21 residues, 1 to 21, serve as a signal peptide directing secretion; that stretch reads MILANAFCLFFFLDETLRSLA. 14 disulfide bridges follow: C40–C93, C47–C53, C63–C78, C95–C105, C161–C222, C168–C174, C185–C200, C195–C241, C224–C229, C251–C323, C258–C264, C275–C293, C285–C347, and C325–C335. N52 carries N-linked (GlcNAc...) asparagine glycosylation. N-linked (GlcNAc...) asparagine glycosylation occurs at N357. Residues 360 to 374 are compositionally biased toward polar residues; that stretch reads DVNLSPKSPPFQATQ. Residues 360–392 are disordered; that stretch reads DVNLSPKSPPFQATQAPRVDKTPSLPDDLSDST. Residues 381–392 are compositionally biased toward low complexity; the sequence is TPSLPDDLSDST. A glycan (N-linked (GlcNAc...) asparagine) is linked at N413. N440 carries GPI-anchor amidated asparagine lipidation. Positions 441–464 are cleaved as a propeptide — removed in mature form; it reads SGPRRTRPSAALTAASFLMLKLAL.

This sequence belongs to the GDNFR family. Interacts with NRTN ligand and RET: forms a 2:2:2 ternary complex composed of NRTN ligand, GFRA2 and RET receptor. Also forms a 4:4:4 tetrameric complex composed of 4 copies of NRTN ligand, GFRA2 and RET receptor, which prevents endocytosis of RET. Interacts with SORL1.

The protein resides in the cell membrane. Functionally, receptor for neurturin (NRTN), a growth factor that supports the survival of sympathetic neurons. NRTN-binding leads to autophosphorylation and activation of the RET receptor. Also able to mediate GDNF signaling through the RET tyrosine kinase receptor. In Bos taurus (Bovine), this protein is GDNF family receptor alpha-2 (GFRA2).